Reading from the N-terminus, the 442-residue chain is C4-dicarboxylate transport protein (442 aa).

The next 9 helical transmembrane spans lie at 13–33, 49–69, 81–101, 149–169, 193–213, 227–247, 312–332, 336–356, and 357–377; these read VLYF…HFYP, GIKM…IAGM, LALL…LVVV, AFAK…GFAL, MIAI…AFTI, LMGS…GIIA, IYLT…MTLL, TLLA…GSGF, and IVLA…LAII.

This sequence belongs to the dicarboxylate/amino acid:cation symporter (DAACS) (TC 2.A.23) family.

It localises to the cell membrane. Functionally, responsible for the transport of dicarboxylates such as succinate, fumarate, and malate across the membrane. The sequence is that of C4-dicarboxylate transport protein from Polynucleobacter asymbioticus (strain DSM 18221 / CIP 109841 / QLW-P1DMWA-1) (Polynucleobacter necessarius subsp. asymbioticus).